We begin with the raw amino-acid sequence, 593 residues long: AT-rich interactive domain-containing protein 3A (593 aa).

A disordered region spans residues 14–222; the sequence is QQRARQELEA…PQLQPPDHGD (209 aa). A compositionally biased stretch (basic and acidic residues) spans 41-53; the sequence is AAPDEDREPESAR. Residues 54-87 are compositionally biased toward low complexity; it reads MQRAQMAALAAMRAAAAGLGHPASPGGSEDGPPG. Phosphoserine is present on residues serine 77, serine 81, and serine 88. A Phosphothreonine modification is found at threonine 98. Phosphoserine occurs at positions 101 and 119. The segment covering 104–127 has biased composition (basic and acidic residues); that stretch reads RGREGPGEEHFEDMASDEDMKPKW. The acidic stretch occupies residues 119-156; sequence SDEDMKPKWEEEEMEEDLGEDEEEEEEDYEDEEEEEDE. Residues 128-158 are compositionally biased toward acidic residues; it reads EEEEMEEDLGEDEEEEEEDYEDEEEEEDEEG. The region spanning 238–330 is the ARID domain; it reads DPKRKEFLDD…YLYPYECEKR (93 aa). Serine 353 and serine 362 each carry phosphoserine. Residues lysine 398, lysine 399, lysine 452, and lysine 462 each participate in a glycyl lysine isopeptide (Lys-Gly) (interchain with G-Cter in SUMO2) cross-link. An REKLES domain is found at 444-541; that stretch reads AALEQLREKL…GVLFAQPPAP (98 aa). An important for nuclear localization region spans residues 445 to 488; it reads ALEQLREKLESAEPPEKKMALVADEQQRLMQRALQQNFLAMAAQ. Positions 490-513 are homodimerization; sequence PMSIRINSQASESRQDSAVNLTGT. Disordered stretches follow at residues 497 to 516 and 539 to 593; these read SQAS…TNGS and PAPT…NSLP. An important for cytoplasmic localization region spans residues 537-557; the sequence is QPPAPTPTSAPNKGGGGGGGS. Positions 549 to 576 are enriched in gly residues; sequence KGGGGGGGSSSNAGGRGGNTGTSGGQAG. The span at 580-593 shows a compositional bias: low complexity; the sequence is LSTPSTSTSNNSLP.

As to quaternary structure, homodimer. Heterodimer with ARID3B. Interacts with E2F1. Interacts with GTF2I and BTK. As to expression, widely expressed, with highest expression in skeletal muscle, thalamus, and colon.

Its subcellular location is the nucleus. It is found in the cytoplasm. Transcription factor which may be involved in the control of cell cycle progression by the RB1/E2F1 pathway and in B-cell differentiation. The sequence is that of AT-rich interactive domain-containing protein 3A (ARID3A) from Homo sapiens (Human).